We begin with the raw amino-acid sequence, 517 residues long: Xylosidase/arabinosidase (517 aa).

The Proton acceptor role is filled by D15. E185 (proton donor) is an active-site residue.

Belongs to the glycosyl hydrolase 43 family.

The enzyme catalyses Hydrolysis of (1-&gt;4)-beta-D-xylans, to remove successive D-xylose residues from the non-reducing termini.. The catalysed reaction is Hydrolysis of terminal non-reducing alpha-L-arabinofuranoside residues in alpha-L-arabinosides.. Has a 1.6-fold higher activity as an arabinosidase than as a beta-xylosidase when tested on the substrates nitrophenyl-beta-D-xylopyranoside and P-nitrophenyl-alpha-L-arabinofuranoside. The sequence is that of Xylosidase/arabinosidase (xylB) from Butyrivibrio fibrisolvens.